Consider the following 22-residue polypeptide: Large ribosomal subunit protein bL32 (22 aa).

The interval 1–22 (CVQQNKKSRSARDMXXSXDALE) is disordered. Residues 13–22 (DMXXSXDALE) are compositionally biased toward low complexity.

The protein belongs to the bacterial ribosomal protein bL32 family.

The protein is Large ribosomal subunit protein bL32 (rpmF) of Ectopseudomonas mendocina (Pseudomonas mendocina).